We begin with the raw amino-acid sequence, 263 residues long: Chymotrypsinogen 2 (263 aa).

The N-terminal stretch at 1 to 18 (MAFLWLLSCFALLGTAFG) is a signal peptide. 5 disulfide bridges follow: cysteine 19–cysteine 140, cysteine 60–cysteine 76, cysteine 154–cysteine 219, cysteine 186–cysteine 200, and cysteine 209–cysteine 238. In terms of domain architecture, Peptidase S1 spans 34-261 (IVNGEDAVPG…LIPWVQQILQ (228 aa)). Histidine 75 functions as the Charge relay system in the catalytic mechanism. Residue serine 93 is modified to Phosphoserine. Aspartate 120 (charge relay system) is an active-site residue. The active-site Charge relay system is the serine 213.

This sequence belongs to the peptidase S1 family.

It localises to the secreted. Its subcellular location is the extracellular space. It carries out the reaction Preferential cleavage: Tyr-|-Xaa, Trp-|-Xaa, Phe-|-Xaa, Leu-|-Xaa.. The sequence is that of Chymotrypsinogen 2 (CTRB1) from Canis lupus familiaris (Dog).